We begin with the raw amino-acid sequence, 381 residues long: NAD-dependent methanol dehydrogenase (381 aa).

It belongs to the iron-containing alcohol dehydrogenase family. In terms of assembly, homodecamer. The cofactor is Mg(2+). It depends on Zn(2+) as a cofactor.

It localises to the cytoplasm. The catalysed reaction is methanol + NAD(+) = formaldehyde + NADH + H(+). The protein operates within one-carbon metabolism; methanol degradation; formaldehyde from methanol: step 1/1. With respect to regulation, stimulated by the activator protein Act which requires the presence of magnesium ions. Inhibited by 1,10-phenanthroline. Catalyzes the oxidation of methanol to yield formaldehyde. It possesses a NADH-dependent formaldehyde reductase activity and cannot use NADP. In Bacillus methanolicus, this protein is NAD-dependent methanol dehydrogenase.